The primary structure comprises 404 residues: S-adenosylmethionine synthase (404 aa).

Residue His-18 participates in ATP binding. Asp-20 is a Mg(2+) binding site. Glu-46 provides a ligand contact to K(+). Glu-59 and Gln-102 together coordinate L-methionine. Residues 102–112 (QSPDIAQGVDT) are flexible loop. ATP is bound by residues 177-179 (DGK), 249-250 (KF), Asp-258, 264-265 (RK), Ala-281, and Lys-285. Asp-258 contributes to the L-methionine binding site. Lys-289 is a binding site for L-methionine.

This sequence belongs to the AdoMet synthase family. In terms of assembly, homotetramer; dimer of dimers. Mg(2+) serves as cofactor. Requires K(+) as cofactor.

It is found in the cytoplasm. The enzyme catalyses L-methionine + ATP + H2O = S-adenosyl-L-methionine + phosphate + diphosphate. It participates in amino-acid biosynthesis; S-adenosyl-L-methionine biosynthesis; S-adenosyl-L-methionine from L-methionine: step 1/1. Its function is as follows. Catalyzes the formation of S-adenosylmethionine (AdoMet) from methionine and ATP. The overall synthetic reaction is composed of two sequential steps, AdoMet formation and the subsequent tripolyphosphate hydrolysis which occurs prior to release of AdoMet from the enzyme. In Nocardia farcinica (strain IFM 10152), this protein is S-adenosylmethionine synthase.